The chain runs to 156 residues: Arginine repressor (156 aa).

It belongs to the ArgR family.

It is found in the cytoplasm. It functions in the pathway amino-acid biosynthesis; L-arginine biosynthesis [regulation]. In terms of biological role, regulates arginine biosynthesis genes. In Vibrio cholerae serotype O1 (strain ATCC 39315 / El Tor Inaba N16961), this protein is Arginine repressor.